Reading from the N-terminus, the 355-residue chain is Heat-inducible transcription repressor HrcA (355 aa).

This sequence belongs to the HrcA family.

Functionally, negative regulator of class I heat shock genes (grpE-dnaK-dnaJ and groELS operons). Prevents heat-shock induction of these operons. In Nitratidesulfovibrio vulgaris (strain ATCC 29579 / DSM 644 / CCUG 34227 / NCIMB 8303 / VKM B-1760 / Hildenborough) (Desulfovibrio vulgaris), this protein is Heat-inducible transcription repressor HrcA.